An 827-amino-acid chain; its full sequence is 4-hydroxy-3-methylbut-2-enyl diphosphate reductase (827 aa).

Residues 1–284 (MEIIRAKHMG…MNIEKKVRGI (284 aa)) form a 4-hydroxy-3-methylbut-2-enyl diphosphate reductase region. Position 12 (cysteine 12) interacts with [4Fe-4S] cluster. 2 residues coordinate (2E)-4-hydroxy-3-methylbut-2-enyl diphosphate: histidine 40 and histidine 79. Histidine 40 and histidine 79 together coordinate dimethylallyl diphosphate. Isopentenyl diphosphate is bound by residues histidine 40 and histidine 79. Position 101 (cysteine 101) interacts with [4Fe-4S] cluster. Histidine 129 serves as a coordination point for (2E)-4-hydroxy-3-methylbut-2-enyl diphosphate. Residue histidine 129 coordinates dimethylallyl diphosphate. Histidine 129 contacts isopentenyl diphosphate. Glutamate 131 functions as the Proton donor in the catalytic mechanism. Threonine 168 provides a ligand contact to (2E)-4-hydroxy-3-methylbut-2-enyl diphosphate. Cysteine 196 is a binding site for [4Fe-4S] cluster. (2E)-4-hydroxy-3-methylbut-2-enyl diphosphate is bound by residues serine 224, serine 225, asparagine 226, and serine 268. Residues serine 224, serine 225, asparagine 226, and serine 268 each contribute to the dimethylallyl diphosphate site. Residues serine 224, serine 225, asparagine 226, and serine 268 each contribute to the isopentenyl diphosphate site. 4 S1 motif domains span residues 477-545 (GQIV…LSIK), 562-632 (DDEI…LGIK), 649-716 (DTVI…GSLK), and 733-802 (GTTV…LSIK).

In the N-terminal section; belongs to the IspH family. It depends on [4Fe-4S] cluster as a cofactor.

It carries out the reaction isopentenyl diphosphate + 2 oxidized [2Fe-2S]-[ferredoxin] + H2O = (2E)-4-hydroxy-3-methylbut-2-enyl diphosphate + 2 reduced [2Fe-2S]-[ferredoxin] + 2 H(+). It catalyses the reaction dimethylallyl diphosphate + 2 oxidized [2Fe-2S]-[ferredoxin] + H2O = (2E)-4-hydroxy-3-methylbut-2-enyl diphosphate + 2 reduced [2Fe-2S]-[ferredoxin] + 2 H(+). The protein operates within isoprenoid biosynthesis; dimethylallyl diphosphate biosynthesis; dimethylallyl diphosphate from (2E)-4-hydroxy-3-methylbutenyl diphosphate: step 1/1. It participates in isoprenoid biosynthesis; isopentenyl diphosphate biosynthesis via DXP pathway; isopentenyl diphosphate from 1-deoxy-D-xylulose 5-phosphate: step 6/6. In terms of biological role, catalyzes the conversion of 1-hydroxy-2-methyl-2-(E)-butenyl 4-diphosphate (HMBPP) into a mixture of isopentenyl diphosphate (IPP) and dimethylallyl diphosphate (DMAPP). Acts in the terminal step of the DOXP/MEP pathway for isoprenoid precursor biosynthesis. In Fusobacterium nucleatum subsp. nucleatum (strain ATCC 25586 / DSM 15643 / BCRC 10681 / CIP 101130 / JCM 8532 / KCTC 2640 / LMG 13131 / VPI 4355), this protein is 4-hydroxy-3-methylbut-2-enyl diphosphate reductase.